Consider the following 921-residue polypeptide: Glutamate receptor 3.7 (921 aa).

An N-terminal signal peptide occupies residues methionine 1 to cysteine 25. The Extracellular portion of the chain corresponds to glutamine 26 to arginine 580. N-linked (GlcNAc...) asparagine glycans are attached at residues asparagine 214, asparagine 300, asparagine 330, asparagine 369, asparagine 396, asparagine 478, and asparagine 568. The helical transmembrane segment at leucine 581–histidine 601 threads the bilayer. Residues arginine 602–arginine 608 are Cytoplasmic-facing. A helical membrane pass occupies residues glycine 609–arginine 629. Over asparagine 630–arginine 640 the chain is Cytoplasmic. Residues leucine 641–leucine 661 form a helical membrane-spanning segment. The Extracellular portion of the chain corresponds to threonine 662–serine 822. A helical membrane pass occupies residues phenylalanine 823–leucine 843. Residues arginine 844 to asparagine 921 lie on the Cytoplasmic side of the membrane. A disordered region spans residues phenylalanine 896–asparagine 921.

The protein belongs to the glutamate-gated ion channel (TC 1.A.10.1) family. As to quaternary structure, may form heteromers. Expressed predominantly in leaves and siliques. Also detected in roots.

Its subcellular location is the membrane. Functionally, glutamate-gated receptor that probably acts as a non-selective cation channel. May be involved in light-signal transduction and calcium homeostasis via the regulation of calcium influx into cells. This is Glutamate receptor 3.7 (GLR3.7) from Arabidopsis thaliana (Mouse-ear cress).